The following is a 360-amino-acid chain: Ankyrin repeat domain-containing protein 2 (360 aa).

The interval Pro5 to Lys120 is may mediate interaction with PML, p53/TP53 and YBX1. Position 99 is a phosphoserine; by PKB/AKT2 (Ser99). The disordered stretch occupies residues Lys126 to Val147. Acidic residues predominate over residues Pro138–Val147. ANK repeat units follow at residues Val147–Thr176, Phe180–Phe209, Leu213–Val242, Leu246–Ala275, and Glu279–Thr308. The span at Ala330 to Gly342 shows a compositional bias: basic and acidic residues. The interval Ala330–Gln360 is disordered.

Interacts with ID3; both proteins cooperate in myoblast differentiation. Interacts with TTN/titin. Interacts (via ANK repeats) with TCAP; the interaction is direct. Interacts with TJP1 (via PDZ domains). Interacts with PML; the interaction is direct. Interacts with p53/TP53. Interacts with YBX1. Interacts with AKT2. In terms of processing, phosphorylation at Ser-99 by PKB/AKT2 in response to oxidative stress induces translocation to the nucleus and negatively regulates myoblast differentiation. In terms of tissue distribution, mostly expressed in skeletal and cardiac muscles. Found in slow fibers. Also expressed in kidney, but to a lower extent (at protein level).

It is found in the cytoplasm. The protein localises to the myofibril. Its subcellular location is the sarcomere. It localises to the i band. The protein resides in the cytosol. It is found in the nucleus. The protein localises to the PML body. Its function is as follows. Functions as a negative regulator of myocyte differentiation. May interact with both sarcoplasmic structural proteins and nuclear proteins to regulate gene expression during muscle development and in response to muscle stress. The sequence is that of Ankyrin repeat domain-containing protein 2 (ANKRD2) from Homo sapiens (Human).